Consider the following 361-residue polypeptide: D-alanine--D-alanine ligase (361 aa).

Residues 134–344 enclose the ATP-grasp domain; that stretch reads KLLLKSFDIP…FKDLVDNLID (211 aa). ATP is bound at residue 167–222; that stretch reads KEVLGYPVIVKPAVLGSSIGINVAYSENQIESFIKEALKYDLTIVIEKFIEAREIE. Residues aspartate 297, glutamate 311, and asparagine 313 each coordinate Mg(2+).

Belongs to the D-alanine--D-alanine ligase family. Requires Mg(2+) as cofactor. Mn(2+) serves as cofactor.

Its subcellular location is the cytoplasm. It catalyses the reaction 2 D-alanine + ATP = D-alanyl-D-alanine + ADP + phosphate + H(+). Its pathway is cell wall biogenesis; peptidoglycan biosynthesis. Its function is as follows. Cell wall formation. The protein is D-alanine--D-alanine ligase of Borreliella burgdorferi (strain ATCC 35210 / DSM 4680 / CIP 102532 / B31) (Borrelia burgdorferi).